We begin with the raw amino-acid sequence, 65 residues long: Large ribosomal subunit protein bL31 (65 aa).

Zn(2+) is bound by residues Cys16, Cys18, Cys36, and Cys39.

This sequence belongs to the bacterial ribosomal protein bL31 family. Type A subfamily. In terms of assembly, part of the 50S ribosomal subunit. The cofactor is Zn(2+).

Functionally, binds the 23S rRNA. This is Large ribosomal subunit protein bL31 from Campylobacter jejuni subsp. doylei (strain ATCC BAA-1458 / RM4099 / 269.97).